A 140-amino-acid polypeptide reads, in one-letter code: Putative pre-16S rRNA nuclease (140 aa).

The protein belongs to the YqgF nuclease family.

Its subcellular location is the cytoplasm. Could be a nuclease involved in processing of the 5'-end of pre-16S rRNA. This chain is Putative pre-16S rRNA nuclease, found in Yersinia enterocolitica serotype O:8 / biotype 1B (strain NCTC 13174 / 8081).